A 147-amino-acid polypeptide reads, in one-letter code: MRAVVQRVSCASLTVEGHSGAQIGPGLTVLLAIAPGDGSRDIDWMVRKLLGLRIFEDDSGKMNASVVDIRGALLIVSQFTLYGDTSRGNRPGFSASAPYETAHEIYNQFVDRLRSSSPLVVQTGVFGRDMQVSLTNDGPVTMILDTP.

Residues 138–139 (GP) carry the Gly-cisPro motif, important for rejection of L-amino acids motif.

It belongs to the DTD family. Homodimer.

The protein localises to the cytoplasm. The enzyme catalyses glycyl-tRNA(Ala) + H2O = tRNA(Ala) + glycine + H(+). The catalysed reaction is a D-aminoacyl-tRNA + H2O = a tRNA + a D-alpha-amino acid + H(+). Its function is as follows. An aminoacyl-tRNA editing enzyme that deacylates mischarged D-aminoacyl-tRNAs. Also deacylates mischarged glycyl-tRNA(Ala), protecting cells against glycine mischarging by AlaRS. Acts via tRNA-based rather than protein-based catalysis; rejects L-amino acids rather than detecting D-amino acids in the active site. By recycling D-aminoacyl-tRNA to D-amino acids and free tRNA molecules, this enzyme counteracts the toxicity associated with the formation of D-aminoacyl-tRNA entities in vivo and helps enforce protein L-homochirality. The chain is D-aminoacyl-tRNA deacylase from Prosthecochloris aestuarii (strain DSM 271 / SK 413).